Reading from the N-terminus, the 70-residue chain is Putative venom toxin Ts29 (70 aa).

The first 20 residues, 1–20 (MSPLFVVLLIATTTFYHSDA), serve as a signal peptide directing secretion.

In terms of tissue distribution, expressed by the venom gland.

It is found in the secreted. This is Putative venom toxin Ts29 from Tityus serrulatus (Brazilian scorpion).